The chain runs to 221 residues: ATP-dependent dethiobiotin synthetase BioD (221 aa).

An ATP-binding site is contributed by 11–16 (GVGKTY). A Mg(2+)-binding site is contributed by Thr15. The active site involves Lys36. Thr40 contacts substrate. ATP is bound by residues Asp48 and 107–110 (EGAG). Positions 48 and 107 each coordinate Mg(2+).

Belongs to the dethiobiotin synthetase family. As to quaternary structure, homodimer. The cofactor is Mg(2+).

The protein localises to the cytoplasm. The enzyme catalyses (7R,8S)-7,8-diammoniononanoate + CO2 + ATP = (4R,5S)-dethiobiotin + ADP + phosphate + 3 H(+). The protein operates within cofactor biosynthesis; biotin biosynthesis; biotin from 7,8-diaminononanoate: step 1/2. Catalyzes a mechanistically unusual reaction, the ATP-dependent insertion of CO2 between the N7 and N8 nitrogen atoms of 7,8-diaminopelargonic acid (DAPA, also called 7,8-diammoniononanoate) to form a ureido ring. The protein is ATP-dependent dethiobiotin synthetase BioD of Hydrogenobaculum sp. (strain Y04AAS1).